The sequence spans 674 residues: Probable L-type lectin-domain containing receptor kinase II.1 (674 aa).

The N-terminal stretch at 1-24 (MAGVLGSVVFWLIIGIHVTFLVFA) is a signal peptide. Residues 25 to 301 (QEGDHFVYYD…PSPKRFPLKE (277 aa)) are Extracellular-facing. Residues 28-274 (DHFVYYDFRN…NQYILGWSFK (247 aa)) are legume-lectin like. 6 N-linked (GlcNAc...) asparagine glycosylation sites follow: Asn57, Asn117, Asn133, Asn185, Asn210, and Asn242. The helical transmembrane segment at 302 to 322 (VLGATISTIAFLTLGGIVYLY) threads the bilayer. Residues 323-674 (KKKKYAEVLE…EDVTVLFGGR (352 aa)) lie on the Cytoplasmic side of the membrane. The Protein kinase domain occupies 355–633 (FRENQLLGAG…LEGNVSVPAI (279 aa)). ATP is bound by residues 361–369 (LGAGGFGKV) and Lys383. Residue Asp480 is the Proton acceptor of the active site.

This sequence in the C-terminal section; belongs to the protein kinase superfamily. Ser/Thr protein kinase family. In the N-terminal section; belongs to the leguminous lectin family.

It localises to the cell membrane. The enzyme catalyses L-seryl-[protein] + ATP = O-phospho-L-seryl-[protein] + ADP + H(+). It carries out the reaction L-threonyl-[protein] + ATP = O-phospho-L-threonyl-[protein] + ADP + H(+). The chain is Probable L-type lectin-domain containing receptor kinase II.1 (LECRK21) from Arabidopsis thaliana (Mouse-ear cress).